A 245-amino-acid polypeptide reads, in one-letter code: tRNA (guanine-N(7)-)-methyltransferase (245 aa).

S-adenosyl-L-methionine contacts are provided by Glu-69, Glu-94, Asp-121, and Asp-144. Residue Asp-144 is part of the active site. Residues Lys-148, Asp-180, and 217-220 each bind substrate; that span reads TKFE. Positions 200–225 are disordered; that stretch reads NLSSSGDYVPRPENRPKTKFERRGEG. Residues 209-225 are compositionally biased toward basic and acidic residues; it reads PRPENRPKTKFERRGEG.

Belongs to the class I-like SAM-binding methyltransferase superfamily. TrmB family.

The catalysed reaction is guanosine(46) in tRNA + S-adenosyl-L-methionine = N(7)-methylguanosine(46) in tRNA + S-adenosyl-L-homocysteine. The protein operates within tRNA modification; N(7)-methylguanine-tRNA biosynthesis. In terms of biological role, catalyzes the formation of N(7)-methylguanine at position 46 (m7G46) in tRNA. This Idiomarina loihiensis (strain ATCC BAA-735 / DSM 15497 / L2-TR) protein is tRNA (guanine-N(7)-)-methyltransferase.